The primary structure comprises 625 residues: Phosphomethylpyrimidine synthase (625 aa).

Substrate is bound by residues N230, M259, Y288, H324, 344 to 346 (SRG), 385 to 388 (DGLR), and E424. H428 contributes to the Zn(2+) binding site. Position 451 (Y451) interacts with substrate. H492 lines the Zn(2+) pocket. Residues C572, C575, and C580 each contribute to the [4Fe-4S] cluster site.

This sequence belongs to the ThiC family. Homodimer. It depends on [4Fe-4S] cluster as a cofactor.

It carries out the reaction 5-amino-1-(5-phospho-beta-D-ribosyl)imidazole + S-adenosyl-L-methionine = 4-amino-2-methyl-5-(phosphooxymethyl)pyrimidine + CO + 5'-deoxyadenosine + formate + L-methionine + 3 H(+). It participates in cofactor biosynthesis; thiamine diphosphate biosynthesis. Catalyzes the synthesis of the hydroxymethylpyrimidine phosphate (HMP-P) moiety of thiamine from aminoimidazole ribotide (AIR) in a radical S-adenosyl-L-methionine (SAM)-dependent reaction. The sequence is that of Phosphomethylpyrimidine synthase from Xanthomonas euvesicatoria pv. vesicatoria (strain 85-10) (Xanthomonas campestris pv. vesicatoria).